A 67-amino-acid chain; its full sequence is Large ribosomal subunit protein bL31 (67 aa).

This sequence belongs to the bacterial ribosomal protein bL31 family. Type A subfamily. As to quaternary structure, part of the 50S ribosomal subunit.

Binds the 23S rRNA. This is Large ribosomal subunit protein bL31 from Leptospira borgpetersenii serovar Hardjo-bovis (strain JB197).